The chain runs to 116 residues: Large ribosomal subunit protein bL19 (116 aa).

This sequence belongs to the bacterial ribosomal protein bL19 family.

Its function is as follows. This protein is located at the 30S-50S ribosomal subunit interface and may play a role in the structure and function of the aminoacyl-tRNA binding site. In Mannheimia succiniciproducens (strain KCTC 0769BP / MBEL55E), this protein is Large ribosomal subunit protein bL19.